The sequence spans 387 residues: uncharacterized protein (387 aa).

The N-terminal stretch at 1-27 (MKKWMITIAMLILAGIALFVFISPLKS) is a signal peptide.

This is an uncharacterized protein from Bacillus subtilis (strain 168).